Reading from the N-terminus, the 343-residue chain is Methionine import ATP-binding protein MetN (343 aa).

Residues 2–241 (IKLSNITKVF…PKTPLAQKFI (240 aa)) form the ABC transporter domain. An ATP-binding site is contributed by 38–45 (GASGAGKS).

It belongs to the ABC transporter superfamily. Methionine importer (TC 3.A.1.24) family. As to quaternary structure, the complex is composed of two ATP-binding proteins (MetN), two transmembrane proteins (MetI) and a solute-binding protein (MetQ).

The protein localises to the cell inner membrane. The enzyme catalyses L-methionine(out) + ATP + H2O = L-methionine(in) + ADP + phosphate + H(+). It catalyses the reaction D-methionine(out) + ATP + H2O = D-methionine(in) + ADP + phosphate + H(+). Functionally, part of the ABC transporter complex MetNIQ involved in methionine import. Responsible for energy coupling to the transport system. The sequence is that of Methionine import ATP-binding protein MetN from Shigella boydii serotype 4 (strain Sb227).